The primary structure comprises 499 residues: Aspartyl/glutamyl-tRNA(Asn/Gln) amidotransferase subunit B (499 aa).

The protein belongs to the GatB/GatE family. GatB subfamily. As to quaternary structure, heterotrimer of A, B and C subunits.

The enzyme catalyses L-glutamyl-tRNA(Gln) + L-glutamine + ATP + H2O = L-glutaminyl-tRNA(Gln) + L-glutamate + ADP + phosphate + H(+). It carries out the reaction L-aspartyl-tRNA(Asn) + L-glutamine + ATP + H2O = L-asparaginyl-tRNA(Asn) + L-glutamate + ADP + phosphate + 2 H(+). Its function is as follows. Allows the formation of correctly charged Asn-tRNA(Asn) or Gln-tRNA(Gln) through the transamidation of misacylated Asp-tRNA(Asn) or Glu-tRNA(Gln) in organisms which lack either or both of asparaginyl-tRNA or glutaminyl-tRNA synthetases. The reaction takes place in the presence of glutamine and ATP through an activated phospho-Asp-tRNA(Asn) or phospho-Glu-tRNA(Gln). This chain is Aspartyl/glutamyl-tRNA(Asn/Gln) amidotransferase subunit B, found in Leifsonia xyli subsp. xyli (strain CTCB07).